An 85-amino-acid polypeptide reads, in one-letter code: MEVVLHLAGHCIETSAKKRYEMLVQELLKEDDEEREKILAEELELLLDFLKKADFSELRRRGFDGSREMRVRVKKVGEEFVVEEI.

Positions Lys17–Ala53 form a coiled coil.

This is an uncharacterized protein from Archaeoglobus fulgidus (strain ATCC 49558 / DSM 4304 / JCM 9628 / NBRC 100126 / VC-16).